We begin with the raw amino-acid sequence, 229 residues long: Adenylate kinase (229 aa).

Position 10 to 15 (glycine 10 to threonine 15) interacts with ATP. The tract at residues glutamate 30 to valine 59 is NMP. Residues serine 31, arginine 36, glutamate 57–valine 59, glycine 84–arginine 87, and glutamine 91 contribute to the AMP site. An LID region spans residues glycine 125 to aspartate 164. Residue arginine 126 participates in ATP binding. AMP-binding residues include arginine 161 and arginine 173. ATP is bound at residue asparagine 209.

This sequence belongs to the adenylate kinase family. Monomer.

It localises to the cytoplasm. The enzyme catalyses AMP + ATP = 2 ADP. It participates in purine metabolism; AMP biosynthesis via salvage pathway; AMP from ADP: step 1/1. Functionally, catalyzes the reversible transfer of the terminal phosphate group between ATP and AMP. Plays an important role in cellular energy homeostasis and in adenine nucleotide metabolism. This chain is Adenylate kinase, found in Lawsonia intracellularis (strain PHE/MN1-00).